Here is a 237-residue protein sequence, read N- to C-terminus: Phosphoribosylaminoimidazole-succinocarboxamide synthase (237 aa).

It belongs to the SAICAR synthetase family.

The enzyme catalyses 5-amino-1-(5-phospho-D-ribosyl)imidazole-4-carboxylate + L-aspartate + ATP = (2S)-2-[5-amino-1-(5-phospho-beta-D-ribosyl)imidazole-4-carboxamido]succinate + ADP + phosphate + 2 H(+). It functions in the pathway purine metabolism; IMP biosynthesis via de novo pathway; 5-amino-1-(5-phospho-D-ribosyl)imidazole-4-carboxamide from 5-amino-1-(5-phospho-D-ribosyl)imidazole-4-carboxylate: step 1/2. The sequence is that of Phosphoribosylaminoimidazole-succinocarboxamide synthase from Fusobacterium nucleatum subsp. nucleatum (strain ATCC 25586 / DSM 15643 / BCRC 10681 / CIP 101130 / JCM 8532 / KCTC 2640 / LMG 13131 / VPI 4355).